The primary structure comprises 483 residues: Glutamyl-tRNA(Gln) amidotransferase subunit A (483 aa).

Residues K76 and S151 each act as charge relay system in the active site. Catalysis depends on S175, which acts as the Acyl-ester intermediate.

This sequence belongs to the amidase family. GatA subfamily. As to quaternary structure, heterotrimer of A, B and C subunits.

The catalysed reaction is L-glutamyl-tRNA(Gln) + L-glutamine + ATP + H2O = L-glutaminyl-tRNA(Gln) + L-glutamate + ADP + phosphate + H(+). Its function is as follows. Allows the formation of correctly charged Gln-tRNA(Gln) through the transamidation of misacylated Glu-tRNA(Gln) in organisms which lack glutaminyl-tRNA synthetase. The reaction takes place in the presence of glutamine and ATP through an activated gamma-phospho-Glu-tRNA(Gln). The polypeptide is Glutamyl-tRNA(Gln) amidotransferase subunit A (Pseudomonas entomophila (strain L48)).